Reading from the N-terminus, the 332-residue chain is RNA polymerase principal sigma factor HrdD (332 aa).

Basic residues predominate over residues M1–S11. Positions M1–A25 are disordered. Residues A13–S22 are compositionally biased toward low complexity. Residues D124 to V137 carry the Polymerase core binding motif. The segment at residues L294–K313 is a DNA-binding region (H-T-H motif).

Belongs to the sigma-70 factor family. Interacts transiently with the RNA polymerase catalytic core.

Its function is as follows. Sigma factors are initiation factors that promote the attachment of RNA polymerase to specific initiation sites and are then released. This Streptomyces coelicolor (strain ATCC BAA-471 / A3(2) / M145) protein is RNA polymerase principal sigma factor HrdD (hrdD).